Reading from the N-terminus, the 240-residue chain is uncharacterized protein (240 aa).

A helical transmembrane segment spans residues 73-93; it reads LLGCLYFFIYFVAPTLGPVLF.

Belongs to the universal ribosomal protein uS3 family.

The protein localises to the mitochondrion membrane. This is an uncharacterized protein from Arabidopsis thaliana (Mouse-ear cress).